The chain runs to 358 residues: Sulfoquinovosyl glycerol transport ATP-binding protein SmoE (358 aa).

One can recognise an ABC transporter domain in the interval 4 to 234 (VSLRKLDKSY…PESVFVGGFV (231 aa)). Position 36 to 43 (36 to 43 (GPSGCGKS)) interacts with ATP.

It belongs to the ABC transporter superfamily. The complex is probably composed of two ATP-binding proteins (SmoE), two transmembrane proteins (SmoG and SmoH) and a solute-binding protein (SmoF).

It is found in the cell inner membrane. Part of the ABC transporter complex SmoEFGH involved in sulfoquinovosyl glycerol (SQGro) uptake. Responsible for energy coupling to the transport system. The sequence is that of Sulfoquinovosyl glycerol transport ATP-binding protein SmoE from Agrobacterium fabrum (strain C58 / ATCC 33970) (Agrobacterium tumefaciens (strain C58)).